The primary structure comprises 482 residues: NADH-quinone oxidoreductase subunit N (482 aa).

Transmembrane regions (helical) follow at residues 11–31 (AVPEMFVLFMALVILLAGVFI), 37–57 (IPYYLTQITLILVAGLTWYIF), 77–97 (RFSVYLKLFIYLSVFFAFIYA), 106–126 (IPHTEFYVLGLLSMLGMVALV), 131–151 (LLTVFLGLELLSLPTYAMVAL), 166–186 (FVIGAIASGMLLYGMSMIFGA), 208–228 (LILVFGLVFIVAGVAFKLGTA), 255–275 (IAAYAMIIRLLILGMPALHVQ), 279–299 (MLIVVAILSMGIGNFAAIVQS), 304–324 (MLAYSSIAHMGYMLLGVLCGT), 332–352 (MFYTITYSLMSLGAFGMVVLM), 376–396 (AFMMMLILFSLAGVPPLVGFI), 404–424 (ALIQVHLVWLAVLAVLFAIVG), and 462–482 (LAVLFIGIFPGWLYALSHLAF).

It belongs to the complex I subunit 2 family. NDH-1 is composed of 14 different subunits. Subunits NuoA, H, J, K, L, M, N constitute the membrane sector of the complex.

The protein localises to the cell inner membrane. The catalysed reaction is a quinone + NADH + 5 H(+)(in) = a quinol + NAD(+) + 4 H(+)(out). NDH-1 shuttles electrons from NADH, via FMN and iron-sulfur (Fe-S) centers, to quinones in the respiratory chain. The immediate electron acceptor for the enzyme in this species is believed to be ubiquinone. Couples the redox reaction to proton translocation (for every two electrons transferred, four hydrogen ions are translocated across the cytoplasmic membrane), and thus conserves the redox energy in a proton gradient. This chain is NADH-quinone oxidoreductase subunit N, found in Coxiella burnetii (strain RSA 493 / Nine Mile phase I).